Here is a 466-residue protein sequence, read N- to C-terminus: Dynein axonemal assembly factor 11 (466 aa).

LRR repeat units follow at residues 22-43 (SLEE…DKWC), 45-66 (DLKI…SKLK), 67-88 (KLEY…EGCE), and 89-110 (ELAK…KNLQ). The LRRCT domain occupies 123–161 (NPCASFDHYREFVVATLPQLKWLDGKEIEPSERIKALQD). A coiled-coil region spans residues 178-204 (LKRAKLKEEAQRKHQEEDKNEDKRSNA). A compositionally biased stretch (basic and acidic residues) spans 185–202 (EEAQRKHQEEDKNEDKRS). Disordered regions lie at residues 185 to 206 (EEAQ…NAGF), 268 to 288 (MEKQ…VKPP), and 391 to 466 (AFKS…PPLI). The span at 269–287 (EKQRKKQEKLSEKKKKVKP) shows a compositional bias: basic residues. The CS domain occupies 301 to 396 (VNEPKIDFSL…GGQRAFKSMK (96 aa)). Basic and acidic residues-rich tracts occupy residues 398–425 (TSDR…KHSF) and 433–445 (QEKK…RPEP). Positions 450–460 (SEEDPTFEDNP) are enriched in acidic residues.

This sequence belongs to the tilB family. Interacts (via CS domain) with ZMYND10 (via C-terminus). As to expression, expressed predominantly in testis and in nasal epithelial cells.

It is found in the cytoplasm. It localises to the cell projection. The protein resides in the cilium. The protein localises to the dynein axonemal particle. Its subcellular location is the flagellum. Functionally, involved in dynein arm assembly, is important for expression and transporting outer dynein arm (ODA) proteins from the cytoplasm to the cilia. Acts as a crucial component in the formation and motility of spermatozoal flagella. This is Dynein axonemal assembly factor 11 from Homo sapiens (Human).